We begin with the raw amino-acid sequence, 120 residues long: Ubiquitin domain-containing protein TINCR (120 aa).

Residues 14 to 83 (YHIKVHLADE…LQDGSVLLLV (70 aa)) form the Ubiquitin-like domain.

In terms of tissue distribution, detected in stratum corneum (at protein level).

The sequence is that of Ubiquitin domain-containing protein TINCR from Homo sapiens (Human).